Consider the following 356-residue polypeptide: UDP-N-acetylglucosamine--N-acetylmuramyl-(pentapeptide) pyrophosphoryl-undecaprenol N-acetylglucosamine transferase (356 aa).

UDP-N-acetyl-alpha-D-glucosamine is bound by residues Arg166, Ser196, and Gln290.

The protein belongs to the glycosyltransferase 28 family. MurG subfamily.

Its subcellular location is the cell membrane. The catalysed reaction is Mur2Ac(oyl-L-Ala-gamma-D-Glu-L-Lys-D-Ala-D-Ala)-di-trans,octa-cis-undecaprenyl diphosphate + UDP-N-acetyl-alpha-D-glucosamine = beta-D-GlcNAc-(1-&gt;4)-Mur2Ac(oyl-L-Ala-gamma-D-Glu-L-Lys-D-Ala-D-Ala)-di-trans,octa-cis-undecaprenyl diphosphate + UDP + H(+). It functions in the pathway cell wall biogenesis; peptidoglycan biosynthesis. Its function is as follows. Cell wall formation. Catalyzes the transfer of a GlcNAc subunit on undecaprenyl-pyrophosphoryl-MurNAc-pentapeptide (lipid intermediate I) to form undecaprenyl-pyrophosphoryl-MurNAc-(pentapeptide)GlcNAc (lipid intermediate II). The sequence is that of UDP-N-acetylglucosamine--N-acetylmuramyl-(pentapeptide) pyrophosphoryl-undecaprenol N-acetylglucosamine transferase from Staphylococcus aureus (strain USA300).